Consider the following 300-residue polypeptide: ETS homologous factor (300 aa).

The PNT domain maps to 29 to 115 (STCNVSSGFF…SNLQHLKWNG (87 aa)). Positions 179–204 (LPIAESPDTKKEQDHPTKPHTKKHNP) are disordered. Residues 185 to 195 (PDTKKEQDHPT) are compositionally biased toward basic and acidic residues. Residues 207-289 (THLWEFIRDI…DGRRLVYKFG (83 aa)) constitute a DNA-binding region (ETS).

The protein belongs to the ETS family.

It is found in the nucleus. Functionally, transcriptional activator that may play a role in regulating epithelial cell differentiation and proliferation. May act as a repressor for a specific subset of ETS/AP-1-responsive genes, and as a modulator of the nuclear response to mitogen-activated protein kinase signaling cascades. Binds to DNA sequences containing the consensus nucleotide core sequence GGAA. Involved in regulation of TNFRSF10B/DR5 expression through Ets-binding sequences on the TNFRSF10B/DR5 promoter. This chain is ETS homologous factor (EHF), found in Bos taurus (Bovine).